The primary structure comprises 165 residues: UPF0114 protein in repA1-repA2 intergenic region (165 aa).

A run of 3 helical transmembrane segments spans residues 10 to 32 (YASR…LLTL), 53 to 75 (LILI…MVMF), and 136 to 155 (IMWC…GMAC).

Belongs to the UPF0114 family.

It is found in the cell membrane. The chain is UPF0114 protein in repA1-repA2 intergenic region from Buchnera aphidicola subsp. Geoica urticularia.